Here is a 278-residue protein sequence, read N- to C-terminus: Ras-related protein Rab-40B (278 aa).

Residues Ser-23, Gly-26, and Lys-27 each coordinate GTP. Residues 41–49 (SPYGHPAGI) form a switch-I region. Asp-69 serves as a coordination point for Mg(2+). GTP contacts are provided by Gly-72, Asn-126, and Arg-127. Residues 72–88 (GQGRFCTIFRSYSRGAQ) are switch-II. Positions 175-228 (LLRHGMDRLWRPSKVLSLQELCCRAVVSCTPGHLVDKLPLPVALRSHLKSFSMA) constitute an SOCS box domain. The segment at 245-278 (ANSSHKRNSFRKVRTIRPPQSPPRNCARNSCKIS) is disordered. The segment covering 248-259 (SHKRNSFRKVRT) has biased composition (basic residues). Cys-270 is lipidated: S-palmitoyl cysteine. Residue Cys-275 is the site of S-geranylgeranyl cysteine attachment.

The protein belongs to the small GTPase superfamily. Rab family. In terms of assembly, component of the cullin-5-RING E3 ubiquitin-protein ligase complex (ECS(RAB40B) complex) composed of CUL5, Elongin BC (ELOB and ELOC), RNF7/RBX2 and RAB40B; RAB40B interaction with ECS complex is GTP-independent. Binds (GTP-bound) LIMA1; interaction promotes LIMA1 subcellular localization in lamellipodia during cell migration. Interacts (GTP-bound) with TKS5/SH3PXD2A (via PX domain); interaction promotes invadopodia-mediated extracellular matrix degradation. Requires Mg(2+) as cofactor.

The protein resides in the cell membrane. The protein localises to the cytoplasm. Its subcellular location is the cytosol. It is found in the cell projection. It localises to the lamellipodium membrane. The protein resides in the ruffle. It catalyses the reaction GTP + H2O = GDP + phosphate + H(+). It functions in the pathway protein modification; protein ubiquitination. With respect to regulation, regulated by guanine nucleotide exchange factors (GEFs) which promote the exchange of bound GDP for free GTP. Regulated by GTPase activating proteins (GAPs) which increase the GTP hydrolysis activity. Inhibited by GDP dissociation inhibitors (GDIs). Its function is as follows. RAB40B small GTPase acts as substrate-recognition components of the ECS(RAB40B) E3 ubiquitin ligase complex which mediates the ubiquitination of target proteins. The Rab40 subfamily belongs to the Rab family that are key regulators of intracellular membrane trafficking, from the formation of transport vesicles to their fusion with membranes. Rabs cycle between an inactive GDP-bound form and an active GTP-bound form that is able to recruit to membranes different sets of downstream effectors directly responsible for vesicle formation, movement, tethering and fusion. As part of the ECS(RAB40B) complex, GTP-bound RAB40B promotes LIMA1/EPLIN ubiquitination and degradation, thereby regulating leading-edge actin dynamics during cell migration. As part of the ECS(RAB40B) complex, GTP-bound RAB40B also ubiquitinates RAP2A GTPase which promotes its localization to lamellipodia and activation to drive cell migration. The ECS(RAB40B) complex does not mediate canonical ubiquitin-dependent degradation of RAP2. RAB40B also binds TKS5/SH3PXD2A effector independently from ECS complex to promote invadopodia-mediated extracellular matrix degradation. This is Ras-related protein Rab-40B from Mus musculus (Mouse).